Here is a 181-residue protein sequence, read N- to C-terminus: Translation initiation factor IF-3 (181 aa).

The protein belongs to the IF-3 family. In terms of assembly, monomer.

It is found in the cytoplasm. Its function is as follows. IF-3 binds to the 30S ribosomal subunit and shifts the equilibrium between 70S ribosomes and their 50S and 30S subunits in favor of the free subunits, thus enhancing the availability of 30S subunits on which protein synthesis initiation begins. The chain is Translation initiation factor IF-3 from Cereibacter sphaeroides (strain ATCC 17023 / DSM 158 / JCM 6121 / CCUG 31486 / LMG 2827 / NBRC 12203 / NCIMB 8253 / ATH 2.4.1.) (Rhodobacter sphaeroides).